Consider the following 217-residue polypeptide: Probable GTP-binding protein EngB (217 aa).

The region spanning 44 to 217 (DRVEVCFAGR…TLRSIIAHLE (174 aa)) is the EngB-type G domain. GTP-binding positions include 52–59 (GRSNVGKS), 79–83 (GRTQE), 97–100 (DLPG), 164–167 (TKAD), and 198–200 (TSS). Mg(2+) is bound by residues Ser-59 and Thr-81.

The protein belongs to the TRAFAC class TrmE-Era-EngA-EngB-Septin-like GTPase superfamily. EngB GTPase family. Requires Mg(2+) as cofactor.

Its function is as follows. Necessary for normal cell division and for the maintenance of normal septation. This Ruegeria pomeroyi (strain ATCC 700808 / DSM 15171 / DSS-3) (Silicibacter pomeroyi) protein is Probable GTP-binding protein EngB.